The sequence spans 156 residues: UPF0756 membrane protein Exig_2210 (156 aa).

The next 5 membrane-spanning stretches (helical) occupy residues 5-25 (LFLI…LIIA), 52-72 (WGVT…DIGF), 83-103 (IGII…HGVG), 109-129 (PLVT…FRGV), and 131-151 (VGPL…DIIV).

This sequence belongs to the UPF0756 family.

The protein resides in the cell membrane. This chain is UPF0756 membrane protein Exig_2210, found in Exiguobacterium sibiricum (strain DSM 17290 / CCUG 55495 / CIP 109462 / JCM 13490 / 255-15).